A 257-amino-acid polypeptide reads, in one-letter code: Phosphonates import ATP-binding protein PhnC (257 aa).

Residues 2–246 form the ABC transporter domain; the sequence is IEFRNVSKVY…KFAEIYGDVA (245 aa). An ATP-binding site is contributed by 35–42; that stretch reads GLSGAGKS.

The protein belongs to the ABC transporter superfamily. Phosphonates importer (TC 3.A.1.9.1) family. The complex is composed of two ATP-binding proteins (PhnC), two transmembrane proteins (PhnE) and a solute-binding protein (PhnD).

It localises to the cell membrane. It carries out the reaction phosphonate(out) + ATP + H2O = phosphonate(in) + ADP + phosphate + H(+). Functionally, part of the ABC transporter complex PhnCDE involved in phosphonates import. Responsible for energy coupling to the transport system. The polypeptide is Phosphonates import ATP-binding protein PhnC (Bacillus cereus (strain ATCC 10987 / NRS 248)).